We begin with the raw amino-acid sequence, 261 residues long: Snake venom serine protease (261 aa).

Positions 1–20 (MALIGVLANLLILCLSYART) are cleaved as a signal peptide. The propeptide occupies 21–24 (APDR). Positions 25 to 249 (IIGGLECNQN…YIDWIQDIMA (225 aa)) constitute a Peptidase S1 domain. Intrachain disulfides connect Cys31/Cys163, Cys50/Cys66, Cys98/Cys256, Cys142/Cys210, Cys174/Cys189, and Cys200/Cys225. His65 (charge relay system) is an active-site residue. Residue Asn103 is glycosylated (N-linked (GlcNAc...) asparagine). Asp110 serves as the catalytic Charge relay system. Asn117 and Asn121 each carry an N-linked (GlcNAc...) asparagine glycan. The active-site Charge relay system is the Ser204.

Belongs to the peptidase S1 family. Snake venom subfamily. As to quaternary structure, monomer. As to expression, expressed by the venom gland.

The protein localises to the secreted. Snake venom serine protease that may act in the hemostasis system of the prey. This is Snake venom serine protease from Philodryas olfersii (Green snake).